The following is a 551-amino-acid chain: Chaperonin GroEL (551 aa).

Residues 30-33 (TLGP), Lys51, 87-91 (DGTTT), Gly415, 478-480 (NAA), and Asp494 each bind ATP.

This sequence belongs to the chaperonin (HSP60) family. Forms a cylinder of 14 subunits composed of two heptameric rings stacked back-to-back. Interacts with the co-chaperonin GroES.

Its subcellular location is the cytoplasm. It carries out the reaction ATP + H2O + a folded polypeptide = ADP + phosphate + an unfolded polypeptide.. Its function is as follows. Together with its co-chaperonin GroES, plays an essential role in assisting protein folding. The GroEL-GroES system forms a nano-cage that allows encapsulation of the non-native substrate proteins and provides a physical environment optimized to promote and accelerate protein folding. The protein is Chaperonin GroEL of Syntrophotalea carbinolica (strain DSM 2380 / NBRC 103641 / GraBd1) (Pelobacter carbinolicus).